Reading from the N-terminus, the 210-residue chain is Pyridoxine/pyridoxamine 5'-phosphate oxidase (210 aa).

Substrate contacts are provided by residues 7-10 (RQSY) and Lys65. FMN-binding positions include 60–65 (RIVLIK), 75–76 (YT), Arg81, Lys82, and Gln104. Positions 122, 126, and 130 each coordinate substrate. Residues 139 to 140 (QS) and Trp182 contribute to the FMN site. 188-190 (RLH) is a binding site for substrate. Residue Arg192 coordinates FMN.

This sequence belongs to the pyridoxamine 5'-phosphate oxidase family. As to quaternary structure, homodimer. It depends on FMN as a cofactor.

It carries out the reaction pyridoxamine 5'-phosphate + O2 + H2O = pyridoxal 5'-phosphate + H2O2 + NH4(+). The catalysed reaction is pyridoxine 5'-phosphate + O2 = pyridoxal 5'-phosphate + H2O2. Its pathway is cofactor metabolism; pyridoxal 5'-phosphate salvage; pyridoxal 5'-phosphate from pyridoxamine 5'-phosphate: step 1/1. It functions in the pathway cofactor metabolism; pyridoxal 5'-phosphate salvage; pyridoxal 5'-phosphate from pyridoxine 5'-phosphate: step 1/1. In terms of biological role, catalyzes the oxidation of either pyridoxine 5'-phosphate (PNP) or pyridoxamine 5'-phosphate (PMP) into pyridoxal 5'-phosphate (PLP). In Bordetella petrii (strain ATCC BAA-461 / DSM 12804 / CCUG 43448), this protein is Pyridoxine/pyridoxamine 5'-phosphate oxidase.